Here is a 308-residue protein sequence, read N- to C-terminus: High-affinity branched-chain amino acid transport system permease protein LivH (308 aa).

Residues 1–21 (MSEQFLYFLQQMFNGVTLGST) lie on the Cytoplasmic side of the membrane. Residues 22–42 (YALIAIGYTMVYGIIGMINFA) traverse the membrane as a helical segment. The Periplasmic segment spans residues 43–45 (HGE). The chain crosses the membrane as a helical span at residues 46-66 (VYMIGSYVSFMIIAALMMMGI). Over 67 to 68 (DT) the chain is Cytoplasmic. A helical membrane pass occupies residues 69-89 (GWLLVAAGFVGAIVIASAYGW). At 90–104 (SIERVAYRPVRNSKR) the chain is on the periplasmic side. Residues 105–125 (LIALISAIGMSIFLQNYVSLT) form a helical membrane-spanning segment. At 126–154 (EGSRDVALPSLFNGQWVVGHSENFSASIT) the chain is on the cytoplasmic side. Residues 155–175 (TMQAVIWIVTFLAMLALTIFI) form a helical membrane-spanning segment. The Periplasmic segment spans residues 176–203 (RYSRMGRACRACAEDLKMASLLGINTDR). The chain crosses the membrane as a helical span at residues 204–224 (VIALTFVIGAAMAAVAGVLLG). The Cytoplasmic segment spans residues 225 to 245 (QFYGVINPYIGFMAGMKAFTA). Residues 246–266 (AVLGGIGSIPGAMIGGLILGI) form a helical membrane-spanning segment. At 267–280 (AEALSSAYLSTEYK) the chain is on the periplasmic side. A helical transmembrane segment spans residues 281 to 301 (DVVSFALLILVLLVMPTGILG). Residues 302 to 308 (RPEVEKV) lie on the Cytoplasmic side of the membrane.

The protein belongs to the binding-protein-dependent transport system permease family. LivHM subfamily.

It is found in the cell inner membrane. Functionally, part of the binding-protein-dependent transport system for branched-chain amino acids. Probably responsible for the translocation of the substrates across the membrane. The polypeptide is High-affinity branched-chain amino acid transport system permease protein LivH (livH) (Escherichia coli O157:H7).